The primary structure comprises 331 residues: Cytosolic Fe-S cluster assembly factor CFD1 (331 aa).

25-32 (GKGGVGKS) lines the ATP pocket. The [4Fe-4S] cluster site is built by Cys211 and Cys214.

The protein belongs to the Mrp/NBP35 ATP-binding proteins family. NUBP2/CFD1 subfamily. As to quaternary structure, heterotetramer of 2 NBP35 and 2 CFD1 chains. The cofactor is [4Fe-4S] cluster.

The protein resides in the cytoplasm. In terms of biological role, component of the cytosolic iron-sulfur (Fe/S) protein assembly (CIA) machinery. Required for maturation of extramitochondrial Fe-S proteins. The NBP35-CFD1 heterotetramer forms a Fe-S scaffold complex, mediating the de novo assembly of an Fe-S cluster and its transfer to target apoproteins. The chain is Cytosolic Fe-S cluster assembly factor CFD1 from Cryptococcus neoformans var. neoformans serotype D (strain B-3501A) (Filobasidiella neoformans).